Reading from the N-terminus, the 258-residue chain is Acyl-[acyl-carrier-protein]--UDP-N-acetylglucosamine O-acyltransferase (258 aa).

This sequence belongs to the transferase hexapeptide repeat family. LpxA subfamily. As to quaternary structure, homotrimer.

The protein resides in the cytoplasm. The catalysed reaction is a (3R)-hydroxyacyl-[ACP] + UDP-N-acetyl-alpha-D-glucosamine = a UDP-3-O-[(3R)-3-hydroxyacyl]-N-acetyl-alpha-D-glucosamine + holo-[ACP]. It functions in the pathway glycolipid biosynthesis; lipid IV(A) biosynthesis; lipid IV(A) from (3R)-3-hydroxytetradecanoyl-[acyl-carrier-protein] and UDP-N-acetyl-alpha-D-glucosamine: step 1/6. Functionally, involved in the biosynthesis of lipid A, a phosphorylated glycolipid that anchors the lipopolysaccharide to the outer membrane of the cell. The polypeptide is Acyl-[acyl-carrier-protein]--UDP-N-acetylglucosamine O-acyltransferase (Alkalilimnicola ehrlichii (strain ATCC BAA-1101 / DSM 17681 / MLHE-1)).